We begin with the raw amino-acid sequence, 107 residues long: Essential MCU regulator, mitochondrial (107 aa).

A mitochondrion-targeting transit peptide spans 1-47; the sequence is MASGAARWLALVRVGSGASRSWLSLRKGGDVSAGRSCSGQSLVPTRS. Residues 48–65 are Mitochondrial matrix-facing; that stretch reads VIVTRSGAILPKPVKMSF. A helical membrane pass occupies residues 66-85; sequence GLLRVFSIVIPFLYVGTLIS. The short motif at 81–85 is the GXXXX[G/A/S] element; that stretch reads GTLIS. Topologically, residues 86–107 are mitochondrial intermembrane; that stretch reads KNFAALLEEHDIFVPEDDDDDD.

This sequence belongs to the SMDT1/EMRE family. Component of the uniplex complex, composed of MCU, EMRE/SMDT1, MICU1 and MICU2 (or MICU3) in a 4:4:1:1 stoichiometry. The number of EMRE/SMDT1 molecules is hovewer variable, ranging from 1 to 4 copies per uniplex complex, leading to uniplex complexes with distinct gatekeeping profiles. Interacts (via its C-terminal poly-Asp tail) with MCUR1; the interaction is direct. Unprocessed form interacts (via transit peptide) with MAIP1. Undergoes proteolytic degradation in neurons: degraded by AFG3L2 and SPG7 before SMDT1/EMRE assembly with the uniporter complex, limiting the availability of SMDT1/EMRE for MCU assembly and promoting efficient assembly of gatekeeper subunits with MCU.

It is found in the mitochondrion inner membrane. Its function is as follows. Essential regulatory subunit of the mitochondrial calcium uniporter complex (uniplex), a complex that mediates calcium uptake into mitochondria. Required to bridge the calcium-sensing proteins MICU1 with the calcium-conducting subunit MCU. Acts by mediating activation of MCU and retention of MICU1 to the MCU pore, in order to ensure tight regulation of the uniplex complex and appropriate responses to intracellular calcium signaling. This chain is Essential MCU regulator, mitochondrial, found in Bos taurus (Bovine).